The chain runs to 78 residues: MSLEDDVKLIIVDQLGVDASEVNENSSFIEDLNADSLDLTELIMTLEEKFDFEISEQDAEKLRTVGDVITYIKTRQGE.

The Carrier domain occupies 1-76 (MSLEDDVKLI…DVITYIKTRQ (76 aa)). An O-(pantetheine 4'-phosphoryl)serine modification is found at Ser-36.

This sequence belongs to the acyl carrier protein (ACP) family. Post-translationally, 4'-phosphopantetheine is transferred from CoA to a specific serine of apo-ACP by AcpS. This modification is essential for activity because fatty acids are bound in thioester linkage to the sulfhydryl of the prosthetic group.

The protein localises to the cytoplasm. It functions in the pathway lipid metabolism; fatty acid biosynthesis. Functionally, carrier of the growing fatty acid chain in fatty acid biosynthesis. The polypeptide is Acyl carrier protein (Chlamydia felis (strain Fe/C-56) (Chlamydophila felis)).